Consider the following 431-residue polypeptide: Signal recognition particle 54 kDa protein (431 aa).

GTP-binding positions include 105 to 112 (GVEGSGKT), 185 to 189 (DTAGR), and 243 to 246 (TKMD).

This sequence belongs to the GTP-binding SRP family. SRP54 subfamily. As to quaternary structure, part of the signal recognition particle protein translocation system, which is composed of SRP and FtsY. Archaeal SRP consists of a 7S RNA molecule of 300 nucleotides and two protein subunits: SRP54 and SRP19.

The protein localises to the cytoplasm. It catalyses the reaction GTP + H2O = GDP + phosphate + H(+). Its function is as follows. Involved in targeting and insertion of nascent membrane proteins into the cytoplasmic membrane. Binds to the hydrophobic signal sequence of the ribosome-nascent chain (RNC) as it emerges from the ribosomes. The SRP-RNC complex is then targeted to the cytoplasmic membrane where it interacts with the SRP receptor FtsY. In Pyrobaculum calidifontis (strain DSM 21063 / JCM 11548 / VA1), this protein is Signal recognition particle 54 kDa protein.